Here is a 361-residue protein sequence, read N- to C-terminus: BBSome complex member bbs-5 (361 aa).

Belongs to the BBS5 family. Part of BBSome complex, that contains at least bbs-1, bbs-2, bbs-4, bbs-5, osm-12, bbs-8/ttc-8 and bbs-9. Interacts with bbs-4 (via C-terminus); the interaction is direct.

The protein localises to the cell projection. The protein resides in the cilium membrane. It localises to the cytoplasm. Its subcellular location is the cytoskeleton. It is found in the cilium basal body. The protein localises to the microtubule organizing center. The protein resides in the centrosome. It localises to the centriolar satellite. Its function is as follows. Component of the BBSome complex. The BBSome complex is thought to function as a coat complex required for sorting of specific membrane proteins to the primary cilia. The BBSome complex is required for ciliogenesis but is dispensable for centriolar satellite function. Required for BBSome complex ciliary localization but not for the proper complex assembly. Required, redundantly with bbs-4, for cilia biogenesis and both the assembly and movement of intraflagellar transport proteins along the ciliary axoneme. Plays a role in the removal of degraded mechanosensory receptors within the cilia. This chain is BBSome complex member bbs-5, found in Caenorhabditis elegans.